A 617-amino-acid chain; its full sequence is Dihydroxy-acid dehydratase (617 aa).

Residue Asp-82 coordinates Mg(2+). Residue Cys-123 participates in [2Fe-2S] cluster binding. Mg(2+) is bound by residues Asp-124 and Lys-125. Lys-125 carries the post-translational modification N6-carboxylysine. Cys-197 contacts [2Fe-2S] cluster. Glu-497 lines the Mg(2+) pocket. Ser-523 acts as the Proton acceptor in catalysis.

This sequence belongs to the IlvD/Edd family. As to quaternary structure, homodimer. Requires [2Fe-2S] cluster as cofactor. Mg(2+) is required as a cofactor.

It carries out the reaction (2R)-2,3-dihydroxy-3-methylbutanoate = 3-methyl-2-oxobutanoate + H2O. It catalyses the reaction (2R,3R)-2,3-dihydroxy-3-methylpentanoate = (S)-3-methyl-2-oxopentanoate + H2O. Its pathway is amino-acid biosynthesis; L-isoleucine biosynthesis; L-isoleucine from 2-oxobutanoate: step 3/4. It participates in amino-acid biosynthesis; L-valine biosynthesis; L-valine from pyruvate: step 3/4. Functions in the biosynthesis of branched-chain amino acids. Catalyzes the dehydration of (2R,3R)-2,3-dihydroxy-3-methylpentanoate (2,3-dihydroxy-3-methylvalerate) into 2-oxo-3-methylpentanoate (2-oxo-3-methylvalerate) and of (2R)-2,3-dihydroxy-3-methylbutanoate (2,3-dihydroxyisovalerate) into 2-oxo-3-methylbutanoate (2-oxoisovalerate), the penultimate precursor to L-isoleucine and L-valine, respectively. This Streptomyces avermitilis (strain ATCC 31267 / DSM 46492 / JCM 5070 / NBRC 14893 / NCIMB 12804 / NRRL 8165 / MA-4680) protein is Dihydroxy-acid dehydratase.